Here is a 286-residue protein sequence, read N- to C-terminus: Simplagrin (286 aa).

The signal sequence occupies residues 1–20; that stretch reads MKKFCLIFLLLALTALHVKG. The segment at 17-179 is disordered; that stretch reads HVKGSPIPDE…GSSSGGEESA (163 aa). Acidic residues-rich tracts occupy residues 24-69 and 103-129; these read PDEE…DGQE and VESGGDEQNDGEENGSQENGEEVTGGE. Asn116 carries N-linked (GlcNAc...) asparagine glycosylation. Residues 166 to 177 show a composition bias toward low complexity; that stretch reads SNRAGSSSGGEE.

This sequence belongs to the aegyptin family. Monomeric in solution; likely has an elongated non-globular form. Interacts with human and rat collagens (via a RGQOGVMGF peptide, where O is hydroxyproline). In terms of processing, not glycosylated. In terms of tissue distribution, salivary gland.

It is found in the secreted. Inhibits host platelet aggregation induced by low concentrations of collagen via blocking the von Willebrand Factor (VWF) interaction with collagen. The polypeptide is Simplagrin (Simulium nigrimanum (Black fly)).